Here is a 208-residue protein sequence, read N- to C-terminus: dITP/XTP pyrophosphatase (208 aa).

16–21 (SNNKGK) serves as a coordination point for substrate. D79 acts as the Proton acceptor in catalysis. D79 lines the Mg(2+) pocket. Substrate is bound by residues S80, 166–169 (FGYD), K189, and 194–195 (HR).

Belongs to the HAM1 NTPase family. In terms of assembly, homodimer. Mg(2+) is required as a cofactor.

It catalyses the reaction XTP + H2O = XMP + diphosphate + H(+). It carries out the reaction dITP + H2O = dIMP + diphosphate + H(+). The catalysed reaction is ITP + H2O = IMP + diphosphate + H(+). Pyrophosphatase that catalyzes the hydrolysis of nucleoside triphosphates to their monophosphate derivatives, with a high preference for the non-canonical purine nucleotides XTP (xanthosine triphosphate), dITP (deoxyinosine triphosphate) and ITP. Seems to function as a house-cleaning enzyme that removes non-canonical purine nucleotides from the nucleotide pool, thus preventing their incorporation into DNA/RNA and avoiding chromosomal lesions. This Acinetobacter baumannii (strain ACICU) protein is dITP/XTP pyrophosphatase.